A 516-amino-acid chain; its full sequence is Bifunctional purine biosynthesis protein PurH (516 aa).

The region spanning 1 to 150 is the MGS-like domain; the sequence is MSDDRKQIKR…KNHPSVAVVV (150 aa).

The protein belongs to the PurH family.

The catalysed reaction is (6R)-10-formyltetrahydrofolate + 5-amino-1-(5-phospho-beta-D-ribosyl)imidazole-4-carboxamide = 5-formamido-1-(5-phospho-D-ribosyl)imidazole-4-carboxamide + (6S)-5,6,7,8-tetrahydrofolate. It catalyses the reaction IMP + H2O = 5-formamido-1-(5-phospho-D-ribosyl)imidazole-4-carboxamide. Its pathway is purine metabolism; IMP biosynthesis via de novo pathway; 5-formamido-1-(5-phospho-D-ribosyl)imidazole-4-carboxamide from 5-amino-1-(5-phospho-D-ribosyl)imidazole-4-carboxamide (10-formyl THF route): step 1/1. It participates in purine metabolism; IMP biosynthesis via de novo pathway; IMP from 5-formamido-1-(5-phospho-D-ribosyl)imidazole-4-carboxamide: step 1/1. The chain is Bifunctional purine biosynthesis protein PurH from Corynebacterium ammoniagenes (Brevibacterium ammoniagenes).